Consider the following 616-residue polypeptide: Chaperone protein HscA (616 aa).

This sequence belongs to the heat shock protein 70 family.

Chaperone involved in the maturation of iron-sulfur cluster-containing proteins. Has a low intrinsic ATPase activity which is markedly stimulated by HscB. Involved in the maturation of IscU. In Pectobacterium carotovorum subsp. carotovorum (strain PC1), this protein is Chaperone protein HscA.